The chain runs to 348 residues: MRFEGSNSMTLLVDDLVSQAQERFAAASDAAALENAKARFLGKEGALTVLLKALGKLDPEQKREMGARINQAKQQIEALLNARRAALAQAELDARLASETIDVTLPGRGKAAGGIHPVIRTWERVEEIFRSIGFDVADGPEVENDWTNFTALNNPLDHPARSMQDTFYVDMHDADGLPLLLRTHTSPMQVRYARMHKPPIKVIAPGRTYRVDSDATHSPMFHQVEGLWIAEDISFADLKGVYTDFLRCFFESDDLVVRFRPSFFPFTEPSAEIDMMFTSGPNRGRWLEISGSGQVHPQVVRNFGLDPERYIGFAFGSGLERLTMLRYGVNDLRQFYEGDLRFLRQFNE.

Glu268 is a Mg(2+) binding site.

It belongs to the class-II aminoacyl-tRNA synthetase family. Phe-tRNA synthetase alpha subunit type 1 subfamily. Tetramer of two alpha and two beta subunits. It depends on Mg(2+) as a cofactor.

It localises to the cytoplasm. It carries out the reaction tRNA(Phe) + L-phenylalanine + ATP = L-phenylalanyl-tRNA(Phe) + AMP + diphosphate + H(+). The sequence is that of Phenylalanine--tRNA ligase alpha subunit from Bordetella bronchiseptica (strain ATCC BAA-588 / NCTC 13252 / RB50) (Alcaligenes bronchisepticus).